A 307-amino-acid polypeptide reads, in one-letter code: Ribosomal protein L11 methyltransferase (307 aa).

Positions 162, 183, 205, and 244 each coordinate S-adenosyl-L-methionine.

This sequence belongs to the methyltransferase superfamily. PrmA family.

Its subcellular location is the cytoplasm. The catalysed reaction is L-lysyl-[protein] + 3 S-adenosyl-L-methionine = N(6),N(6),N(6)-trimethyl-L-lysyl-[protein] + 3 S-adenosyl-L-homocysteine + 3 H(+). In terms of biological role, methylates ribosomal protein L11. The protein is Ribosomal protein L11 methyltransferase of Bordetella parapertussis (strain 12822 / ATCC BAA-587 / NCTC 13253).